The following is a 255-amino-acid chain: Indole-3-glycerol phosphate synthase (255 aa).

The protein belongs to the TrpC family.

The catalysed reaction is 1-(2-carboxyphenylamino)-1-deoxy-D-ribulose 5-phosphate + H(+) = (1S,2R)-1-C-(indol-3-yl)glycerol 3-phosphate + CO2 + H2O. The protein operates within amino-acid biosynthesis; L-tryptophan biosynthesis; L-tryptophan from chorismate: step 4/5. This is Indole-3-glycerol phosphate synthase from Streptococcus gordonii (strain Challis / ATCC 35105 / BCRC 15272 / CH1 / DL1 / V288).